Consider the following 366-residue polypeptide: Cytochrome c mitochondrial import factor CYC2 (366 aa).

The N-terminal 50 residues, 1–50, are a transit peptide targeting the mitochondrion; the sequence is MLWKNYVLSSSRITRRLHKSPRKSSFSKNFFITGCLLTVGAVSSYLTYRY. An FAD-binding FR-type domain is found at 63 to 184; sequence SYFVKYKISH…RGPFIDYEFP (122 aa).

FAD is required as a cofactor.

It localises to the mitochondrion inner membrane. Functionally, redox component that participates in c-type cytochrome biogenesis in the mitochondrial intermembrane space. May play a role in the reduction of heme prior to its ligation to apocytochrome c by cytochrome c heme lyase. Has oxidoreductase activity in vitro. The protein is Cytochrome c mitochondrial import factor CYC2 (CYC2) of Saccharomyces cerevisiae (strain ATCC 204508 / S288c) (Baker's yeast).